We begin with the raw amino-acid sequence, 176 residues long: Neuroblastoma suppressor of tumorigenicity 1 (176 aa).

The first 17 residues, methionine 1–alanine 17, serve as a signal peptide directing secretion. Disulfide bonds link cysteine 34–cysteine 84, cysteine 48–cysteine 98, cysteine 58–cysteine 117, cysteine 62–cysteine 119, and cysteine 81–cysteine 122. Residues cysteine 34 to glycine 123 enclose the CTCK domain. Residues glutamate 148–glutamate 176 form a disordered region.

Belongs to the DAN family. As to quaternary structure, interacts with bmp2; the interaction is blocked in presence of nog.

Its subcellular location is the secreted. In terms of biological role, may act as a tumor suppressor. Cytokine that has an axial patterning activity. Acts like bone morpho-genetic protein (BMP) antagonist in embryonic explants. Blocks the bmp2 activity. This Xenopus tropicalis (Western clawed frog) protein is Neuroblastoma suppressor of tumorigenicity 1 (nbl1).